The chain runs to 973 residues: FHF complex subunit HOOK-interacting protein 1B (973 aa).

Disordered stretches follow at residues 466 to 493 (SSPS…VVTV), 510 to 547 (SLGG…PGEL), and 573 to 647 (SAPY…EGAK). S467 is modified (phosphoserine). The span at 482–493 (SPSVDSSSVVTV) shows a compositional bias: low complexity. Phosphoserine occurs at positions 510, 523, 529, and 533. Low complexity-rich tracts occupy residues 529–538 (SPASSPGRRP) and 622–639 (GARE…NGLP). S859 and S898 each carry phosphoserine.

Belongs to the FHIP family. In terms of assembly, component of the FTS/Hook/FHIP complex (FHF complex), composed of AKTIP/FTS, FHIP1B, and one or more members of the Hook family of proteins HOOK1, HOOK2, and HOOK3. The FHF complex associates with the homotypic vesicular sorting complex (the HOPS complex).

In terms of biological role, component of the FTS/Hook/FHIP complex (FHF complex). The FHF complex may function to promote vesicle trafficking and/or fusion via the homotypic vesicular protein sorting complex (the HOPS complex). FHF complex promotes the distribution of AP-4 complex to the perinuclear area of the cell. This Bos taurus (Bovine) protein is FHF complex subunit HOOK-interacting protein 1B (FHIP1B).